A 192-amino-acid chain; its full sequence is Protein A16 (192 aa).

The first 22 residues, 1–22, serve as a signal peptide directing secretion; sequence MLLANTAAAVLLLIVCIGASVG. In terms of domain architecture, C-type lectin spans 71-186; that stretch reads KNKKFTIGTL…CLNPLNIFPY (116 aa). A disulfide bond links cysteine 163 and cysteine 177.

Expressed in the gut of adults.

This is Protein A16 (CTL3) from Anopheles gambiae (African malaria mosquito).